Consider the following 333-residue polypeptide: 5-formaminoimidazole-4-carboxamide-1-(beta)-D-ribofuranosyl 5'-monophosphate synthetase (333 aa).

2 residues coordinate 5-amino-1-(5-phospho-beta-D-ribosyl)imidazole-4-carboxamide: His-10 and Ser-74. The region spanning 95–324 is the ATP-grasp domain; that stretch reads RNLFAWESNQ…ISREIRLALN (230 aa). ATP is bound by residues 125–185 and Glu-207; that span reads VEDV…VPMY. 5-amino-1-(5-phospho-beta-D-ribosyl)imidazole-4-carboxamide is bound at residue Asn-230. 2 residues coordinate Mg(2+): Glu-269 and Glu-282.

Belongs to the phosphohexose mutase family. The cofactor is Mg(2+). Mn(2+) serves as cofactor.

It carries out the reaction 5-amino-1-(5-phospho-beta-D-ribosyl)imidazole-4-carboxamide + formate + ATP = 5-formamido-1-(5-phospho-D-ribosyl)imidazole-4-carboxamide + ADP + phosphate. It functions in the pathway purine metabolism; IMP biosynthesis via de novo pathway; 5-formamido-1-(5-phospho-D-ribosyl)imidazole-4-carboxamide from 5-amino-1-(5-phospho-D-ribosyl)imidazole-4-carboxamide (formate route): step 1/1. Catalyzes the ATP- and formate-dependent formylation of 5-aminoimidazole-4-carboxamide-1-beta-d-ribofuranosyl 5'-monophosphate (AICAR) to 5-formaminoimidazole-4-carboxamide-1-beta-d-ribofuranosyl 5'-monophosphate (FAICAR) in the absence of folates. This is 5-formaminoimidazole-4-carboxamide-1-(beta)-D-ribofuranosyl 5'-monophosphate synthetase from Sulfolobus acidocaldarius (strain ATCC 33909 / DSM 639 / JCM 8929 / NBRC 15157 / NCIMB 11770).